The primary structure comprises 46 residues: MLTLLNTFAELPEAYKAFAPTVDVLPLIPLFFFLLVFVWQAAVGFK.

Residues 1–9 (MLTLLNTFA) constitute a propeptide that is removed on maturation. A helical membrane pass occupies residues 25–45 (LPLIPLFFFLLVFVWQAAVGF).

Belongs to the PsbK family. PSII is composed of 1 copy each of membrane proteins PsbA, PsbB, PsbC, PsbD, PsbE, PsbF, PsbH, PsbI, PsbJ, PsbK, PsbL, PsbM, PsbT, PsbX, PsbY, Psb30/Ycf12, peripheral proteins PsbO, CyanoQ (PsbQ), PsbU, PsbV and a large number of cofactors. It forms dimeric complexes.

The protein resides in the cellular thylakoid membrane. Its function is as follows. One of the components of the core complex of photosystem II (PSII). PSII is a light-driven water:plastoquinone oxidoreductase that uses light energy to abstract electrons from H(2)O, generating O(2) and a proton gradient subsequently used for ATP formation. It consists of a core antenna complex that captures photons, and an electron transfer chain that converts photonic excitation into a charge separation. The sequence is that of Photosystem II reaction center protein K from Prochlorococcus marinus (strain MIT 9515).